Here is a 432-residue protein sequence, read N- to C-terminus: Delta-aminolevulinic acid dehydratase, chloroplastic (432 aa).

Positions Ala-84–Asn-113 are disordered. Lys-300 functions as the Schiff-base intermediate with substrate in the catalytic mechanism. 5-aminolevulinate-binding residues include Arg-310 and Lys-322. Mg(2+) is bound at residue Glu-338. The Schiff-base intermediate with substrate role is filled by Lys-353. Positions 379 and 418 each coordinate 5-aminolevulinate.

The protein belongs to the ALAD family. Homooctamer. Requires Mg(2+) as cofactor.

It localises to the plastid. Its subcellular location is the chloroplast. It carries out the reaction 2 5-aminolevulinate = porphobilinogen + 2 H2O + H(+). It functions in the pathway porphyrin-containing compound metabolism; protoporphyrin-IX biosynthesis; coproporphyrinogen-III from 5-aminolevulinate: step 1/4. Catalyzes an early step in the biosynthesis of tetrapyrroles. Binds two molecules of 5-aminolevulinate per subunit, each at a distinct site, and catalyzes their condensation to form porphobilinogen. The protein is Delta-aminolevulinic acid dehydratase, chloroplastic (HEMB) of Physcomitrium patens (Spreading-leaved earth moss).